We begin with the raw amino-acid sequence, 823 residues long: Kinesin-like protein KIN-7N (823 aa).

The region spanning 3-325 is the Kinesin motor domain; that stretch reads KICVAVRVRP…LQFASRAKRI (323 aa). 83–90 provides a ligand contact to ATP; it reads GQTSSGKT. 3 coiled-coil regions span residues 341–414, 527–557, and 696–786; these read LKRQ…NLNN, RENH…FNEQ, and EKKL…MEEE.

It belongs to the TRAFAC class myosin-kinesin ATPase superfamily. Kinesin family. KIN-7 subfamily.

The polypeptide is Kinesin-like protein KIN-7N (Arabidopsis thaliana (Mouse-ear cress)).